The sequence spans 211 residues: Probable metallo-hydrolase YqgX (211 aa).

Residues histidine 54, histidine 56, aspartate 58, histidine 59, histidine 130, aspartate 149, and histidine 190 each coordinate Zn(2+).

This sequence belongs to the metallo-beta-lactamase superfamily. Glyoxalase II family. Requires Zn(2+) as cofactor.

This Bacillus subtilis (strain 168) protein is Probable metallo-hydrolase YqgX (yqgX).